A 395-amino-acid chain; its full sequence is MAKEKFDRSKTHANIGTIGHVDHGKTTLTAAIATVLSKKLGGEARSYDQIDNAPEEKERGITINTSHIEYETEKRHYAHVDCPGHADYVKNMITGAAQMDGGILVVSAADGPMPQTREHILLSRNVGVPALVVFLNKVDMVDDEELLELVEMEVRDLLSEYDFPGDDVPVIAGSALKALEGVEEYEDKIMELMDAVDEYIPTPERDSDKPFMMPVEDVFSITGRGTVATGRVERGQVKVGEEVEIIGLTEEPSKTTVTGVEMFRKLLDYAEAGDNIGALLRGVSREDVQRGQVLAKPGSITPHTKFKAEVYVLSKEEGGRHTPFFTNYRPQFYFRTTDVTGVVNLPEGTEMVMPGDNIEMNVELISPIAIEDGTRFSIREGGRTVGSGVVSVIEK.

A tr-type G domain is found at lysine 10–glutamate 204. The interval glycine 19–threonine 26 is G1. Position 19-26 (glycine 19–threonine 26) interacts with GTP. Residue threonine 26 coordinates Mg(2+). Positions glycine 60–asparagine 64 are G2. A G3 region spans residues aspartate 81–glycine 84. Residues aspartate 81 to histidine 85 and asparagine 136 to aspartate 139 each bind GTP. A G4 region spans residues asparagine 136–aspartate 139. A G5 region spans residues serine 174–leucine 176.

The protein belongs to the TRAFAC class translation factor GTPase superfamily. Classic translation factor GTPase family. EF-Tu/EF-1A subfamily. In terms of assembly, monomer.

The protein localises to the cytoplasm. It catalyses the reaction GTP + H2O = GDP + phosphate + H(+). Functionally, GTP hydrolase that promotes the GTP-dependent binding of aminoacyl-tRNA to the A-site of ribosomes during protein biosynthesis. The chain is Elongation factor Tu from Macrococcus caseolyticus (strain JCSC5402) (Macrococcoides caseolyticum).